The following is a 203-amino-acid chain: RNA annealing protein YRA2 (203 aa).

M1 bears the N-acetylmethionine mark. 2 disordered regions span residues 1–60 (MDKA…REEP) and 137–203 (QPQR…YMKG). A compositionally biased stretch (polar residues) spans 11 to 20 (NSHTDSSSNH). Basic and acidic residues predominate over residues 47-60 (SRSKDRLYREREEP). Residues 64-138 (KRIRISKIPL…AKIEVEIYQP (75 aa)) enclose the RRM domain. The span at 139–153 (QRKHSRMNAHNRRKQ) shows a compositional bias: basic residues. The span at 154 to 164 (TAQEHGRDRPG) shows a compositional bias: basic and acidic residues. The segment covering 165–180 (SHYRQKPNRVSKKNKG) has biased composition (basic residues).

Belongs to the YRA1 family. As to quaternary structure, associates with mRNPs. Interacts with YRA1.

It localises to the nucleus. Involved in export of poly(A) mRNAs from the nucleus. Recruited to the coding sequences as well as poly-A sites of active genes. The chain is RNA annealing protein YRA2 (YRA2) from Saccharomyces cerevisiae (strain YJM789) (Baker's yeast).